The chain runs to 921 residues: Sodium/calcium exchanger 2 (921 aa).

The first 20 residues, 1–20 (MAPLALVGVALLLGAPHCLG), serve as a signal peptide directing secretion. The Extracellular portion of the chain corresponds to 21 to 68 (EATPTPSLPPPPANDSDASPGGCQGSYRCQPGVLLPVWEPDDPSLGDK). Positions 23–42 (TPTPSLPPPPANDSDASPGG) are disordered. N34 carries an N-linked (GlcNAc...) asparagine glycan. Residues 69 to 90 (AARAVVYFVAMVYMFLGLSIIA) traverse the membrane as a helical segment. The Cytoplasmic portion of the chain corresponds to 91–130 (DRFMASIEVITSKEKEITITKANGETSVGTVRIWNETVSN). A helical transmembrane segment spans residues 131 to 152 (LTLMALGSSAPEILLSVIEVCG). The stretch at 135 to 175 (ALGSSAPEILLSVIEVCGHNFQAGELGPGTIVGSAAFNMFV) is one Alpha-1 repeat. At 153 to 164 (HNFQAGELGPGT) the chain is on the extracellular side. The helical transmembrane segment at 165 to 185 (IVGSAAFNMFVVIAVCVYVIP) threads the bilayer. The Cytoplasmic segment spans residues 186 to 196 (AGESRKIKHLR). Residues 197–219 (VFFVTASWSIFAYVWLYLILAVF) traverse the membrane as a helical segment. The Extracellular segment spans residues 220–222 (SPG). A helical transmembrane segment spans residues 223 to 246 (VVQVWEALLTLVFFPVCVVFAWMA). Residues 247–720 (DKRLLFYKYV…DGSREERLPS (474 aa)) lie on the Cytoplasmic side of the membrane. Residues 248 to 267 (KRLLFYKYVYKRYRTDPRSG) form a putative calmodulin-binding region region. The disordered stretch occupies residues 372–391 (AADAARRPGANDGAPDDEDD). Calx-beta domains lie at 384 to 483 (GAPD…VRLL) and 512 to 612 (ATVT…IELG). Ca(2+) is bound by residues E407, D443, D468, D469, I471, E473, E476, D518, D519, D520, E536, D598, E599, and E600. S622 bears the Phosphoserine mark. E665 serves as a coordination point for Ca(2+). Residues 721–740 (CFDYVMHFLTVFWKVLFACL) form a helical membrane-spanning segment. The Extracellular segment spans residues 741–747 (PPTEYCH). A helical membrane pass occupies residues 748–770 (GWACFGVCILVIGLLTALIGDLA). Residues 771–772 (SH) are Cytoplasmic-facing. The chain crosses the membrane as a helical span at residues 773–791 (FGCTVGLKDSVNAVVFVAL). The stretch at 790 to 826 (ALGTSIPDTFASKVAALQDQCADASIGNVTGSNAVNV) is one Alpha-2 repeat. At 792-822 (GTSIPDTFASKVAALQDQCADASIGNVTGSN) the chain is on the extracellular side. Residue N817 is glycosylated (N-linked (GlcNAc...) asparagine). Residues 823-843 (AVNVFLGLGVAWSVAAVYWAV) form a helical membrane-spanning segment. Topologically, residues 844–854 (QGRPFEVRTGT) are cytoplasmic. The helical transmembrane segment at 855–875 (LAFSVTLFTVFAFVGIAVLLY) threads the bilayer. Topologically, residues 876 to 892 (RRRPHIGGELGGPRGPK) are extracellular. A helical transmembrane segment spans residues 893–909 (LATTALFLGLWFLYILF). The Cytoplasmic portion of the chain corresponds to 910–921 (ASLEAYCHIRGF).

Belongs to the Ca(2+):cation antiporter (CaCA) (TC 2.A.19) family. SLC8 subfamily. As to expression, detected in neocortex and hippocampus on pyramidal cells, astrocyte processes and dendrites (at protein level). Brain and skeletal muscle.

Its subcellular location is the cell membrane. It is found in the basolateral cell membrane. It localises to the perikaryon. The protein localises to the cell projection. The protein resides in the dendrite. Its subcellular location is the dendritic spine. It carries out the reaction Ca(2+)(in) + 3 Na(+)(out) = Ca(2+)(out) + 3 Na(+)(in). Its activity is regulated as follows. Calcium transport is down-regulated by Na(+) and stimulated by Ca(2+). Mediates the electrogenic exchange of Ca(2+) against Na(+) ions across the cell membrane, and thereby contributes to the regulation of cytoplasmic Ca(2+) levels and Ca(2+)-dependent cellular processes. Contributes to cellular Ca(2+) homeostasis in excitable cells. Contributes to the rapid decrease of cytoplasmic Ca(2+) levels back to baseline after neuronal activation, and thereby contributes to modulate synaptic plasticity, learning and memory. Plays a role in regulating urinary Ca(2+) and Na(+) excretion. The chain is Sodium/calcium exchanger 2 (Slc8a2) from Rattus norvegicus (Rat).